The following is a 734-amino-acid chain: Rho GTPase-activating protein gacL (734 aa).

The Rho-GAP domain maps to 141–339 (ISLDTLIAKE…QMILHYDTLF (199 aa)). WD repeat units follow at residues 381–430 (GHNK…FIKE), 539–579 (LFMK…TIHQ), and 585–623 (KRPK…LEHK).

It is found in the cytoplasm. Rho GTPase-activating protein involved in the signal transduction pathway. This chain is Rho GTPase-activating protein gacL (gacL), found in Dictyostelium discoideum (Social amoeba).